The primary structure comprises 1039 residues: uncharacterized protein (1039 aa).

The first 28 residues, 1 to 28 (MKLFPRTLLKILVVSFILNFGVTSKSYA), serve as a signal peptide directing secretion. Helical transmembrane passes span 326-346 (IVTA…LLAG), 354-374 (YINF…LNIT), 387-407 (MIQW…SWVM), 491-511 (MLVS…AFMV), 517-537 (CMVS…MFLF), and 551-571 (MISF…MFSV). Residues 654–680 (KPNQTCDPKAADADTKCNPKPGDSSTS) form a disordered region. A helical transmembrane segment spans residues 710–730 (IKDILLALVTACFTLYLMYNF). 3 disordered regions span residues 799-875 (LVKG…PTTV), 917-949 (IKEA…LDEN), and 1004-1039 (LYRS…DENP). Residues 802–811 (GSGGGGGSEG) are compositionally biased toward gly residues. Residues 812 to 836 (GDSFTSGGLRETSSTAATPSSALSS) show a composition bias toward low complexity. The span at 843–861 (GTATPSSASEEMLDTSFSN) shows a compositional bias: polar residues. 2 stretches are compositionally biased toward basic and acidic residues: residues 917-939 (IKEA…HTTE) and 1004-1033 (LYRS…KIDS).

This sequence belongs to the TrbL/VirB6 family.

It localises to the cell membrane. This is an uncharacterized protein from Rickettsia bellii (strain RML369-C).